The chain runs to 123 residues: Small ribosomal subunit protein uS12 (123 aa).

The interval 1–47 is disordered; sequence MPTINQLVRKGRKKAEKKQSTPALKGGPQKRGVCTRVYTSTPKKPNS. 3-methylthioaspartic acid is present on D89.

This sequence belongs to the universal ribosomal protein uS12 family. As to quaternary structure, part of the 30S ribosomal subunit. Contacts proteins S8 and S17. May interact with IF1 in the 30S initiation complex.

Its function is as follows. With S4 and S5 plays an important role in translational accuracy. In terms of biological role, interacts with and stabilizes bases of the 16S rRNA that are involved in tRNA selection in the A site and with the mRNA backbone. Located at the interface of the 30S and 50S subunits, it traverses the body of the 30S subunit contacting proteins on the other side and probably holding the rRNA structure together. The combined cluster of proteins S8, S12 and S17 appears to hold together the shoulder and platform of the 30S subunit. The polypeptide is Small ribosomal subunit protein uS12 (Desulforapulum autotrophicum (strain ATCC 43914 / DSM 3382 / VKM B-1955 / HRM2) (Desulfobacterium autotrophicum)).